Reading from the N-terminus, the 342-residue chain is Dihydroorotate dehydrogenase (quinone) (342 aa).

FMN is bound by residues 65–69 and T89; that span reads AGLDK. Residue K69 participates in substrate binding. 114–118 is a binding site for substrate; it reads NRMGF. Positions 142 and 175 each coordinate FMN. N175 serves as a coordination point for substrate. S178 functions as the Nucleophile in the catalytic mechanism. N180 is a substrate binding site. Residues K220 and T248 each coordinate FMN. Substrate is bound at residue 249 to 250; that stretch reads NT. FMN-binding positions include G271, G300, and 321–322; that span reads YT.

This sequence belongs to the dihydroorotate dehydrogenase family. Type 2 subfamily. Monomer. FMN is required as a cofactor.

It is found in the cell membrane. It carries out the reaction (S)-dihydroorotate + a quinone = orotate + a quinol. It functions in the pathway pyrimidine metabolism; UMP biosynthesis via de novo pathway; orotate from (S)-dihydroorotate (quinone route): step 1/1. Functionally, catalyzes the conversion of dihydroorotate to orotate with quinone as electron acceptor. This chain is Dihydroorotate dehydrogenase (quinone), found in Burkholderia pseudomallei (strain 668).